Consider the following 157-residue polypeptide: 3-dehydroquinate dehydratase (157 aa).

The Proton acceptor role is filled by Y29. Substrate is bound by residues N80, H86, and D93. Residue H107 is the Proton donor of the active site. Residues 108-109 (IS) and R118 contribute to the substrate site.

It belongs to the type-II 3-dehydroquinase family. In terms of assembly, homododecamer.

It carries out the reaction 3-dehydroquinate = 3-dehydroshikimate + H2O. Its pathway is metabolic intermediate biosynthesis; chorismate biosynthesis; chorismate from D-erythrose 4-phosphate and phosphoenolpyruvate: step 3/7. Its function is as follows. Catalyzes a trans-dehydration via an enolate intermediate. The chain is 3-dehydroquinate dehydratase (aroQ) from Streptomyces coelicolor (strain ATCC BAA-471 / A3(2) / M145).